A 417-amino-acid polypeptide reads, in one-letter code: Tryptophan synthase beta chain (417 aa).

Lysine 111 is modified (N6-(pyridoxal phosphate)lysine).

Belongs to the TrpB family. As to quaternary structure, tetramer of two alpha and two beta chains. It depends on pyridoxal 5'-phosphate as a cofactor.

It carries out the reaction (1S,2R)-1-C-(indol-3-yl)glycerol 3-phosphate + L-serine = D-glyceraldehyde 3-phosphate + L-tryptophan + H2O. It participates in amino-acid biosynthesis; L-tryptophan biosynthesis; L-tryptophan from chorismate: step 5/5. Its function is as follows. The beta subunit is responsible for the synthesis of L-tryptophan from indole and L-serine. This chain is Tryptophan synthase beta chain, found in Fervidobacterium nodosum (strain ATCC 35602 / DSM 5306 / Rt17-B1).